Here is a 291-residue protein sequence, read N- to C-terminus: Methionine aminopeptidase (291 aa).

Histidine 65 is a substrate binding site. Residues aspartate 85, aspartate 96, and histidine 155 each coordinate a divalent metal cation. Histidine 163 serves as a coordination point for substrate. Glutamate 188 and glutamate 276 together coordinate a divalent metal cation.

It belongs to the peptidase M24A family. Methionine aminopeptidase archaeal type 2 subfamily. Monomer. Requires Co(2+) as cofactor. The cofactor is Zn(2+). Mn(2+) serves as cofactor. It depends on Fe(2+) as a cofactor.

It carries out the reaction Release of N-terminal amino acids, preferentially methionine, from peptides and arylamides.. Removes the N-terminal methionine from nascent proteins. The N-terminal methionine is often cleaved when the second residue in the primary sequence is small and uncharged (Met-Ala-, Cys, Gly, Pro, Ser, Thr, or Val). This chain is Methionine aminopeptidase, found in Archaeoglobus fulgidus (strain ATCC 49558 / DSM 4304 / JCM 9628 / NBRC 100126 / VC-16).